The primary structure comprises 71 residues: Small ribosomal subunit protein eS17 (71 aa).

It belongs to the eukaryotic ribosomal protein eS17 family.

The sequence is that of Small ribosomal subunit protein eS17 from Pyrobaculum neutrophilum (strain DSM 2338 / JCM 9278 / NBRC 100436 / V24Sta) (Thermoproteus neutrophilus).